We begin with the raw amino-acid sequence, 343 residues long: N-malonyltransferase FDB2 (343 aa).

Cysteine 107 functions as the Acyl-thioester intermediate in the catalytic mechanism. Histidine 155 functions as the Proton acceptor in the catalytic mechanism. The active site involves aspartate 170.

This sequence belongs to the arylamine N-acetyltransferase family.

It participates in xenobiotic degradation. Functionally, N-malonyltransferase; part of the Fusarium detoxification of benzoxazolinone cluster involved in the degradation of benzoxazolinones produced by the host plant. Maize, wheat, and rye produce the 2 benzoxazinone phytoanticipins 2,4-dihy-droxy-7-methoxy-1,4-benzoxazin-3-one (DIMBOA) and 2,4-dihydroxy-1,4-benzoxazin-3-one (DIBOA) that, due to their inherent instability once released, spontaneously degrade to the more stable corresponding benzoxazolinones, 6-methoxy-2-benzoxazolinone (MBOA) and 2-benzoxazolinone (BOA), respectively. The first step in the detoxification of benzoxazolinones involves the hydrolysis of the cyclic ester bond of benzoxazolinones by the gamma-lactamase FDB1 to aminophenols. FDB1 is able to convert BOA into 2-aminophenol (2-AP), as well as MBOA into 5-methoxy-2-aminophenol (2-AMP). The N-malonyltransferase FDB2 then metabolizes aminophenols via N-malonylation to non-toxic malonamic acids. FDB2 converts 2-AP into N-(2-hydroxyphenyl) malonamic acid (HPMA) and 2-AMP into N-(2-hydroxy-4-methoxyphenyl) malonamic acid (HMPMA). The cluster also contains 2 transcription factors (FDB3 and FPSE_08121), an aldo-keto reductase (FPSE_08125) that possibly associates with a ketone component of BOA and MBOA degradation, an esterase (FPSE_08126), an acyl-CoA transferase (FPSE_08120), a solute carrier protein (FPSE_08119) and a transmembrane transporter (FPSE_08127) proposed to shuttle metabolites of benzoxazolinone degradation. In Fusarium pseudograminearum (strain CS3096) (Wheat and barley crown-rot fungus), this protein is N-malonyltransferase FDB2.